The sequence spans 92 residues: Probable Fe(2+)-trafficking protein (92 aa).

It belongs to the Fe(2+)-trafficking protein family.

Its function is as follows. Could be a mediator in iron transactions between iron acquisition and iron-requiring processes, such as synthesis and/or repair of Fe-S clusters in biosynthetic enzymes. The polypeptide is Probable Fe(2+)-trafficking protein (Xanthomonas campestris pv. campestris (strain 8004)).